We begin with the raw amino-acid sequence, 296 residues long: Urease operon transcriptional activator (296 aa).

The 98-residue stretch at 171–268 (QAITHLITQE…NMTPSQFRLQ (98 aa)) folds into the HTH araC/xylS-type domain. 2 consecutive DNA-binding regions (H-T-H motif) follow at residues 188 to 209 (DDVA…NREG) and 235 to 258 (VFQI…KRKY).

Positive regulator of the expression of the urease operon. The chain is Urease operon transcriptional activator (ureR) from Escherichia coli.